Here is a 374-residue protein sequence, read N- to C-terminus: MTSPALKDPAKTRVIVGMSGGVDSSVSALLLIEQGYQVEGLFMKNWEEDDGTEYCTAREDLADAQAVCDRIGIKLHTANFAAEYWDNVFEHFLEEYKAGRTPNPDILCNREIKFKAFLDYALSLGADLIATGHYVRRRDTGDLTELLKGLDPNKDQSYFLHAVGGKEIARTLFPVGELEKPEVRAIAEKHGLATAKKKDSTGICFIGERRFSDFLKQYLPAQPGDIETTEGEVIGRHHGLMYHTIGQRQGLGIGGLKDAGDEPWYVLHKDLTRNVLVVGQGNEHPWLFSRALLASEIFWVNPIDLSSPRQLTAKVRYRQSDQQCTLELTETGYRAVFDEPQRAVTPGQSVVFYDGEVCLGGGVIEAAEPWSPRA.

ATP is bound by residues 17 to 24 (GMSGGVDS) and M43. Residues 103–105 (NPD) are interaction with target base in tRNA. C108 acts as the Nucleophile in catalysis. Cysteines 108 and 204 form a disulfide. Residue G132 participates in ATP binding. Residues 154–156 (KDQ) form an interaction with tRNA region. C204 functions as the Cysteine persulfide intermediate in the catalytic mechanism. Residues 316 to 317 (RY) form an interaction with tRNA region.

This sequence belongs to the MnmA/TRMU family.

It is found in the cytoplasm. The catalysed reaction is S-sulfanyl-L-cysteinyl-[protein] + uridine(34) in tRNA + AH2 + ATP = 2-thiouridine(34) in tRNA + L-cysteinyl-[protein] + A + AMP + diphosphate + H(+). Functionally, catalyzes the 2-thiolation of uridine at the wobble position (U34) of tRNA, leading to the formation of s(2)U34. The chain is tRNA-specific 2-thiouridylase MnmA from Pseudomonas putida (strain GB-1).